Reading from the N-terminus, the 1117-residue chain is Guanylate cyclase D (1117 aa).

The first 66 residues, 1-66 (MAGLQQGCHF…ADSLSLLAWA (66 aa)), serve as a signal peptide directing secretion. The Extracellular segment spans residues 67–479 (RETFTLGVLG…CIRGVQPLGS (413 aa)). C121 and C149 are joined by a disulfide. The helical transmembrane segment at 480 to 500 (LLTLTIACVLALVGGFLAYFI) threads the bilayer. At 501 to 1117 (RLGLQQLRLL…RKSGEAGPGP (617 aa)) the chain is on the cytoplasmic side. Residues 529–557 (TPSRRRPHVDSGSESRSVVDGGSPRSVTQ) form a disordered region. The Protein kinase domain maps to 541-812 (SESRSVVDGG…PSLDQIYTQF (272 aa)). An interaction with NCALD region spans residues 874 to 915 (MGTTVEPEYFDQVTIYFSDIVGFTTISALSEPIEVVGFLNDL). The region spanning 887–1017 (TIYFSDIVGF…DTVNTASRME (131 aa)) is the Guanylate cyclase domain. The tract at residues 1096 to 1117 (GFAKARQGLAEPRKSGEAGPGP) is disordered.

It belongs to the adenylyl cyclase class-4/guanylyl cyclase family. Interacts (via the catalytic domain) with NCALD. In terms of tissue distribution, found in a subset of olfactory neurons in the main olfactory epithelium.

The protein localises to the cell projection. Its subcellular location is the cilium membrane. It carries out the reaction GTP = 3',5'-cyclic GMP + diphosphate. Activated by Ca(2+). Functions as an olfactory receptor activated by urine odorants, uroguanylin and guanylin and as well by the volatile semiochemicals carbon disulfide (CS2) and carbon dioxide (CO2). Has guanylate cyclase activity upon binding of the ligand. Activation of GUCY2D neurons leads to the cGMP-dependent activation of the CNGA3 channels, membrane depolarization and an increase in action potential frequency. Signaling pathways activated by GUCY2D may trigger social behaviors such as acquisition of food preference. This chain is Guanylate cyclase D, found in Mus musculus (Mouse).